The chain runs to 115 residues: Gp30 (115 aa).

This is Gp30 from Haloferax tailed virus 1 (HFTV1).